Consider the following 251-residue polypeptide: MPKRDAPWRLTAGTAKISRTGNNSRALIMGPSTSRASAWVNRPMYRKPRIYRMYRTPDVPKGCEGPCKVQSFEQRHDVSHVGKVICISDVTRGNGITHRVGKRFCVKSVYILGKIWMDENIKLKNHTNSVMFWLVRDRRPYGTPMDFGQVFNMYDNEPSTATVKNDLRDRYQVMHRFYAKVTGGQYASNEQALVRRFWKVNNHVVYNHQEAGKYENHTENALLLYMACTHASNPVYATLKIRVYFYDSIMN.

A Bipartite nuclear localization signal motif is present at residues 3-20 (KRDAPWRLTAGTAKISRT). Residues 35–49 (RASAWVNRPMYRKPR) carry the Nuclear localization signal motif. The segment at 63-80 (CEGPCKVQSFEQRHDVSH) is a zinc-finger region. Positions 96–117 (ITHRVGKRFCVKSVYILGKIWM) match the Nuclear export signal motif. Residues 195 to 242 (RRFWKVNNHVVYNHQEAGKYENHTENALLLYMACTHASNPVYATLKIR) carry the Bipartite nuclear localization signal motif.

The protein belongs to the geminiviridae capsid protein family. In terms of assembly, homomultimer. Binds to single-stranded and double-stranded viral DNA. Interacts (via nuclear localization signals) with host importin alpha-1a.

The protein localises to the virion. It localises to the host nucleus. In terms of biological role, encapsidates the viral DNA into characteristic twinned ('geminate') particles. Binds the genomic viral ssDNA and shuttles it into and out of the cell nucleus. The CP of bipartite geminiviruses is not required for cell-to-cell or systemic movement. This is Capsid protein from Capsicum annuum (Capsicum pepper).